A 535-amino-acid polypeptide reads, in one-letter code: Protein translocase subunit SecD (535 aa).

The next 6 membrane-spanning stretches (helical) occupy residues Leu-5–Gly-25, Ala-377–Ile-397, Ser-402–Leu-421, Gly-425–Phe-444, Trp-469–Phe-489, and Gly-496–Ser-516.

The protein belongs to the SecD/SecF family. SecD subfamily. In terms of assembly, forms a complex with SecF. Part of the essential Sec protein translocation apparatus which comprises SecA, SecYEG and auxiliary proteins SecDF. Other proteins may also be involved.

Its subcellular location is the cell inner membrane. Functionally, part of the Sec protein translocase complex. Interacts with the SecYEG preprotein conducting channel. SecDF uses the proton motive force (PMF) to complete protein translocation after the ATP-dependent function of SecA. The sequence is that of Protein translocase subunit SecD from Koribacter versatilis (strain Ellin345).